The following is a 251-amino-acid chain: Probable transcriptional regulatory protein MAB_2888c (251 aa).

The disordered stretch occupies residues Met-1–Arg-20.

Belongs to the TACO1 family.

Its subcellular location is the cytoplasm. The protein is Probable transcriptional regulatory protein MAB_2888c of Mycobacteroides abscessus (strain ATCC 19977 / DSM 44196 / CCUG 20993 / CIP 104536 / JCM 13569 / NCTC 13031 / TMC 1543 / L948) (Mycobacterium abscessus).